Consider the following 139-residue polypeptide: Actin-depolymerizing factor 4 (139 aa).

An ADF-H domain is found at 5–139; that stretch reads SSGVAIHDDC…SLDALKDRVK (135 aa).

This sequence belongs to the actin-binding proteins ADF family. As to quaternary structure, interacts with LECRK1 (via kinase domain).

Its subcellular location is the cytoplasm. It localises to the cytoskeleton. Its function is as follows. Actin-depolymerizing protein. Severs actin filaments (F-actin) and binds to actin monomers. Involved in innate immunity. Required for the expression of defense-related genes PR1A, LOX2 and CHS1 upon biotic stresses. Required for basal resistance to the fungal blast (Magnaporthe grisea), bacterial blight (Xanthomonas oryzae pv. oryzae, Xoo) and the herbivorous insect brown planthopper (Nilaparvata lugens, BPH). Involved in the promotion of seed germination. Required for the expression of alpha-amylase genes during seed germination. This chain is Actin-depolymerizing factor 4 (ADF4), found in Oryza sativa subsp. japonica (Rice).